The primary structure comprises 76 residues: Protein krueppel (76 aa).

C2H2-type zinc fingers lie at residues 11–33 and 39–61; these read FECS…LRLH and YSCP…LRVH.

The protein belongs to the krueppel C2H2-type zinc-finger protein family.

The protein localises to the nucleus. Functionally, krueppel is a gap class segmentation protein. The polypeptide is Protein krueppel (Kr) (Manduca sexta (Tobacco hawkmoth)).